Here is a 226-residue protein sequence, read N- to C-terminus: 7-cyano-7-deazaguanine synthase (226 aa).

8 to 18 (LSGGLDSTTVL) contacts ATP. Zn(2+) is bound by residues C190, C198, C201, and C204.

The protein belongs to the QueC family. In terms of assembly, homodimer. Zn(2+) is required as a cofactor.

It catalyses the reaction 7-carboxy-7-deazaguanine + NH4(+) + ATP = 7-cyano-7-deazaguanine + ADP + phosphate + H2O + H(+). It participates in purine metabolism; 7-cyano-7-deazaguanine biosynthesis. In terms of biological role, catalyzes the ATP-dependent conversion of 7-carboxy-7-deazaguanine (CDG) to 7-cyano-7-deazaguanine (preQ(0)). The protein is 7-cyano-7-deazaguanine synthase of Clostridium kluyveri (strain ATCC 8527 / DSM 555 / NBRC 12016 / NCIMB 10680 / K1).